The sequence spans 178 residues: Interleukin-10 (178 aa).

A signal peptide spans 1-18 (MHSSALLCCLVLLTGVRA). Cystine bridges form between Cys-30–Cys-126 and Cys-80–Cys-132. N-linked (GlcNAc...) asparagine glycosylation occurs at Asn-134.

Belongs to the IL-10 family. As to quaternary structure, homodimer. Interacts with IL10RA and IL10RB.

The protein localises to the secreted. Functionally, major immune regulatory cytokine that acts on many cells of the immune system where it has profound anti-inflammatory functions, limiting excessive tissue disruption caused by inflammation. Mechanistically, IL10 binds to its heterotetrameric receptor comprising IL10RA and IL10RB leading to JAK1 and STAT2-mediated phosphorylation of STAT3. In turn, STAT3 translocates to the nucleus where it drives expression of anti-inflammatory mediators. Targets antigen-presenting cells (APCs) such as macrophages and monocytes and inhibits their release of pro-inflammatory cytokines including granulocyte-macrophage colony-stimulating factor /GM-CSF, granulocyte colony-stimulating factor/G-CSF, IL-1 alpha, IL-1 beta, IL-6, IL-8 and TNF-alpha. Also interferes with antigen presentation by reducing the expression of MHC-class II and co-stimulatory molecules, thereby inhibiting their ability to induce T cell activation. In addition, controls the inflammatory response of macrophages by reprogramming essential metabolic pathways including mTOR signaling. In Macaca nemestrina (Pig-tailed macaque), this protein is Interleukin-10 (IL10).